Here is a 276-residue protein sequence, read N- to C-terminus: 4-hydroxy-tetrahydrodipicolinate reductase (276 aa).

Residues 10–15 (GALGKM), Asp36, and 109–111 (GTT) contribute to the NAD(+) site. His165 functions as the Proton donor/acceptor in the catalytic mechanism. (S)-2,3,4,5-tetrahydrodipicolinate is bound at residue His166. Lys169 serves as the catalytic Proton donor. 175-176 (GT) serves as a coordination point for (S)-2,3,4,5-tetrahydrodipicolinate.

It belongs to the DapB family.

The protein resides in the cytoplasm. The catalysed reaction is (S)-2,3,4,5-tetrahydrodipicolinate + NAD(+) + H2O = (2S,4S)-4-hydroxy-2,3,4,5-tetrahydrodipicolinate + NADH + H(+). It catalyses the reaction (S)-2,3,4,5-tetrahydrodipicolinate + NADP(+) + H2O = (2S,4S)-4-hydroxy-2,3,4,5-tetrahydrodipicolinate + NADPH + H(+). The protein operates within amino-acid biosynthesis; L-lysine biosynthesis via DAP pathway; (S)-tetrahydrodipicolinate from L-aspartate: step 4/4. In terms of biological role, catalyzes the conversion of 4-hydroxy-tetrahydrodipicolinate (HTPA) to tetrahydrodipicolinate. This Prochlorococcus marinus (strain SARG / CCMP1375 / SS120) protein is 4-hydroxy-tetrahydrodipicolinate reductase.